The following is a 1551-amino-acid chain: Pentafunctional AROM polypeptide (1551 aa).

The segment at 1 to 379 (MSIEKVPILG…YQLKAHEVSK (379 aa)) is 3-dehydroquinate synthase. Residues 42 to 44 (DTN), 80 to 83 (ENNK), 111 to 113 (GGV), and Asp116 each bind NAD(+). Position 127 (Arg127) interacts with 7-phospho-2-dehydro-3-deoxy-D-arabino-heptonate. 136 to 137 (TT) serves as a coordination point for NAD(+). 2 residues coordinate 7-phospho-2-dehydro-3-deoxy-D-arabino-heptonate: Asp143 and Lys149. An NAD(+)-binding site is contributed by Lys158. 7-phospho-2-dehydro-3-deoxy-D-arabino-heptonate is bound at residue Asn159. Residues 176-179 (YLES) and Asn187 contribute to the NAD(+) site. Residue Glu191 participates in Zn(2+) binding. 7-phospho-2-dehydro-3-deoxy-D-arabino-heptonate contacts are provided by residues 191–194 (EVVK) and Lys243. The Proton acceptor; for 3-dehydroquinate synthase activity role is filled by Glu253. 7-phospho-2-dehydro-3-deoxy-D-arabino-heptonate-binding positions include 257 to 261 (RNLLN) and His264. Zn(2+) is bound at residue His264. His268 acts as the Proton acceptor; for 3-dehydroquinate synthase activity in catalysis. 2 residues coordinate 7-phospho-2-dehydro-3-deoxy-D-arabino-heptonate: His280 and Lys351. His280 provides a ligand contact to Zn(2+). Positions 392-838 (VHPFKQPPQE…WDILHSKFNI (447 aa)) are EPSP synthase. The interval 858-1048 (DKSIIIIGMR…IPSGRSAALS (191 aa)) is shikimate kinase. 865–872 (GMRGTGKS) serves as a coordination point for ATP. Residues 1049-1258 (LTVPDLNAIS…NEDGLLTIKE (210 aa)) form a 3-dehydroquinase region. Lys1194 (schiff-base intermediate with substrate; for 3-dehydroquinate dehydratase activity) is an active-site residue. The shikimate dehydrogenase stretch occupies residues 1271–1551 (AKKFWVIGSP…DVIHRAVVEE (281 aa)).

The protein in the N-terminal section; belongs to the sugar phosphate cyclases superfamily. Dehydroquinate synthase family. In the 2nd section; belongs to the EPSP synthase family. This sequence in the 3rd section; belongs to the shikimate kinase family. It in the 4th section; belongs to the type-I 3-dehydroquinase family. The protein in the C-terminal section; belongs to the shikimate dehydrogenase family. Homodimer. Zn(2+) is required as a cofactor.

The protein localises to the cytoplasm. It carries out the reaction 7-phospho-2-dehydro-3-deoxy-D-arabino-heptonate = 3-dehydroquinate + phosphate. The enzyme catalyses 3-dehydroquinate = 3-dehydroshikimate + H2O. The catalysed reaction is shikimate + NADP(+) = 3-dehydroshikimate + NADPH + H(+). It catalyses the reaction shikimate + ATP = 3-phosphoshikimate + ADP + H(+). It carries out the reaction 3-phosphoshikimate + phosphoenolpyruvate = 5-O-(1-carboxyvinyl)-3-phosphoshikimate + phosphate. Its pathway is metabolic intermediate biosynthesis; chorismate biosynthesis; chorismate from D-erythrose 4-phosphate and phosphoenolpyruvate: step 2/7. The protein operates within metabolic intermediate biosynthesis; chorismate biosynthesis; chorismate from D-erythrose 4-phosphate and phosphoenolpyruvate: step 3/7. It participates in metabolic intermediate biosynthesis; chorismate biosynthesis; chorismate from D-erythrose 4-phosphate and phosphoenolpyruvate: step 4/7. It functions in the pathway metabolic intermediate biosynthesis; chorismate biosynthesis; chorismate from D-erythrose 4-phosphate and phosphoenolpyruvate: step 5/7. Its pathway is metabolic intermediate biosynthesis; chorismate biosynthesis; chorismate from D-erythrose 4-phosphate and phosphoenolpyruvate: step 6/7. Its function is as follows. The AROM polypeptide catalyzes 5 consecutive enzymatic reactions in prechorismate polyaromatic amino acid biosynthesis. The sequence is that of Pentafunctional AROM polypeptide from Candida tropicalis (strain ATCC MYA-3404 / T1) (Yeast).